The following is a 340-amino-acid chain: Beta-ketoacyl-[acyl-carrier-protein] synthase III (340 aa).

Active-site residues include Cys119 and His260. Residues 261–265 (QANYR) are ACP-binding. The active site involves Asn290.

This sequence belongs to the thiolase-like superfamily. FabH family. In terms of assembly, homodimer.

The protein localises to the cytoplasm. It catalyses the reaction malonyl-[ACP] + acetyl-CoA + H(+) = 3-oxobutanoyl-[ACP] + CO2 + CoA. It participates in lipid metabolism; fatty acid biosynthesis. Catalyzes the condensation reaction of fatty acid synthesis by the addition to an acyl acceptor of two carbons from malonyl-ACP. Catalyzes the first condensation reaction which initiates fatty acid synthesis and may therefore play a role in governing the total rate of fatty acid production. Possesses both acetoacetyl-ACP synthase and acetyl transacylase activities. Its substrate specificity determines the biosynthesis of branched-chain and/or straight-chain of fatty acids. This Sulfurovum sp. (strain NBC37-1) protein is Beta-ketoacyl-[acyl-carrier-protein] synthase III.